The chain runs to 154 residues: MTSESTLPPVVPPLHSPKSPVWPTFPFHREGSRIWERGGGIAPRDLPSPLPTKRTRTYSATARASAGPVFKGVCKQFSRSQGHGFITPENGSEDIFVHVSDIEGEYVPVEGDEVTYKICPIPPKNQKFQAVEVVLTQLAPHTPHETWSGQVVGS.

A Phosphoserine modification is found at Ser-19. Residues 38–62 form a disordered region; sequence GGGIAPRDLPSPLPTKRTRTYSATA. The CSD domain maps to 69 to 136; the sequence is VFKGVCKQFS…KFQAVEVVLT (68 aa).

Its subcellular location is the nucleus. It is found in the cytoplasm. In terms of biological role, RNA-binding factor which binds specifically to the very 3'-UTR ends of both histone H1 and H3.3 mRNAs, encompassing the polyadenylation signal. Might play a central role in the negative regulation of histone variant synthesis in the developing brain. The chain is Cold shock domain-containing protein C2 (Csdc2) from Mus musculus (Mouse).